Consider the following 353-residue polypeptide: Protein RecA (353 aa).

75–82 (GPESSGKT) provides a ligand contact to ATP.

Belongs to the RecA family.

It localises to the cytoplasm. Functionally, can catalyze the hydrolysis of ATP in the presence of single-stranded DNA, the ATP-dependent uptake of single-stranded DNA by duplex DNA, and the ATP-dependent hybridization of homologous single-stranded DNAs. It interacts with LexA causing its activation and leading to its autocatalytic cleavage. In Cupriavidus necator (Alcaligenes eutrophus), this protein is Protein RecA.